Here is a 292-residue protein sequence, read N- to C-terminus: Expansin-like protein 6 (292 aa).

The first 24 residues, methionine 1–alanine 24, serve as a signal peptide directing secretion. At aspartate 25–leucine 267 the chain is on the extracellular side. One can recognise an Expansin-like EG45 domain in the interval histidine 47–asparagine 150. Disulfide bonds link cysteine 50–cysteine 80 and cysteine 83–cysteine 145. Residue asparagine 92 is glycosylated (N-linked (GlcNAc...) asparagine). Residues proline 268–phenylalanine 288 traverse the membrane as a helical segment. At serine 289–tyrosine 292 the chain is on the cytoplasmic side.

The protein belongs to the expansin family. Expansin A subfamily.

Its subcellular location is the membrane. Its function is as follows. May serve to lubricate the movement of the cellulose microfibrils during cell growth and wall extension and/or may serve to maintain the fluid state of the slug cell wall. This is Expansin-like protein 6 (expl6) from Dictyostelium discoideum (Social amoeba).